Here is a 177-residue protein sequence, read N- to C-terminus: Thymidine kinase (177 aa).

11-18 is an ATP binding site; it reads GPMFSGKS. The active-site Proton acceptor is the E83. F113 contacts substrate. Residues C138 and C141 each coordinate Zn(2+). Residue 157-161 participates in substrate binding; sequence IEIIG. Positions 170 and 173 each coordinate Zn(2+).

Belongs to the thymidine kinase family. As to quaternary structure, homotetramer. Two molecules of substrate bind to each enzyme tetramer.

It catalyses the reaction thymidine + ATP = dTMP + ADP + H(+). Phosphorylates thymidine and thymidine analogs, such as azidothymidine (AZT). Part of the salvage pathway for pyrimidine deoxyribonucleotide synthesis. This is Thymidine kinase (OPG101) from Procyon lotor (Raccoon).